The chain runs to 488 residues: Putative serine carboxypeptidase-like 30 (488 aa).

An N-terminal signal peptide occupies residues 1–28 (MDNHTKSFSSLLISLWFTALLILVEMVS). Intrachain disulfides connect Cys99–Cys368, Cys262–Cys275, and Cys299–Cys336. N-linked (GlcNAc...) asparagine glycosylation is present at Asn150. Residue Ser192 is part of the active site. N-linked (GlcNAc...) asparagine glycosylation is present at Asn263. N-linked (GlcNAc...) asparagine glycans are attached at residues Asn364 and Asn375. Catalysis depends on residues Asp405 and His457.

This sequence belongs to the peptidase S10 family. Expression not detected.

The protein resides in the secreted. In terms of biological role, probable carboxypeptidase. This is Putative serine carboxypeptidase-like 30 (SCPL30) from Arabidopsis thaliana (Mouse-ear cress).